The sequence spans 840 residues: Heat shock 70 kDa protein 4 (840 aa).

At Lys53 the chain carries N6-acetyllysine. The residue at position 76 (Ser76) is a Phosphoserine. Residues Tyr89 and Tyr336 each carry the phosphotyrosine modification. Phosphoserine is present on residues Ser393 and Ser415. Residue Lys430 is modified to N6-acetyllysine. A disordered region spans residues 506–575; that stretch reads NEEPMETDQN…QAKKAKVKTS (70 aa). A compositionally biased stretch (basic and acidic residues) spans 514-533; the sequence is QNAKEEEKMQVDQEEPHAEE. Thr538 carries the post-translational modification Phosphothreonine. Residues Ser546 and Ser647 each carry the phosphoserine modification. A Phosphotyrosine modification is found at Tyr660. Lys679 is subject to N6-acetyllysine. Ser756 carries the post-translational modification Phosphoserine. N6-methyllysine is present on Lys773. Positions 782 to 840 are disordered; sequence IISKPKPKVEPPKEEQKNAEQNGPVDGQGDSPGPQAAEQGTDTAVPSDSDKKLPEMDID. 2 stretches are compositionally biased toward basic and acidic residues: residues 788–799 and 829–840; these read PKVEPPKEEQKN and DSDKKLPEMDID.

The protein belongs to the heat shock protein 70 family. In terms of assembly, interacts with TJP1/ZO-1.

The protein resides in the cytoplasm. The polypeptide is Heat shock 70 kDa protein 4 (HSPA4) (Canis lupus familiaris (Dog)).